The following is a 591-amino-acid chain: L-lactate dehydrogenase (cytochrome) (591 aa).

Residues methionine 1–asparagine 80 constitute a mitochondrion transit peptide. Residues lysine 88–glutamine 165 form the Cytochrome b5 heme-binding domain. Heme b is bound by residues histidine 123, histidine 146, tyrosine 177, glutamine 219, and tyrosine 223. Residues proline 197–leucine 563 form the FMN hydroxy acid dehydrogenase domain. Tyrosine 223 provides a ligand contact to pyruvate. Residues serine 275–alanine 278, serine 308, and glutamine 332 contribute to the FMN site. Pyruvate is bound at residue tyrosine 334. Position 360 (threonine 360) interacts with FMN. Lysine 376 provides a ligand contact to heme b. FMN is bound at residue lysine 429. Pyruvate-binding residues include histidine 453 and arginine 456. The Proton acceptor role is filled by histidine 453. Residues aspartate 489 to arginine 493 and glycine 512 to arginine 513 contribute to the FMN site.

It in the N-terminal section; belongs to the cytochrome b5 family. This sequence in the C-terminal section; belongs to the FMN-dependent alpha-hydroxy acid dehydrogenase family. As to quaternary structure, homotetramer. Requires FMN as cofactor. Heme b is required as a cofactor.

The protein resides in the mitochondrion intermembrane space. It carries out the reaction (S)-lactate + 2 Fe(III)-[cytochrome c] = 2 Fe(II)-[cytochrome c] + pyruvate + 2 H(+). Catalyzes the oxidation of (S)-lactate (L-lactate) to pyruvate with subsequent transfer of electrons to cytochrome c. Is involved in the utilization of (S)-lactate as a sole source of carbon for growth. Can also use ferricyanide as an electron acceptor in vitro. The sequence is that of L-lactate dehydrogenase (cytochrome) (CYB2) from Saccharomyces cerevisiae (strain ATCC 204508 / S288c) (Baker's yeast).